The primary structure comprises 141 residues: Small ribosomal subunit protein bS6 (141 aa).

The interval Val96 to Glu141 is disordered. Residues Leu103–Gly124 show a composition bias toward basic and acidic residues. Over residues Ala125–Glu141 the composition is skewed to acidic residues.

The protein belongs to the bacterial ribosomal protein bS6 family.

Binds together with bS18 to 16S ribosomal RNA. This is Small ribosomal subunit protein bS6 from Pseudomonas entomophila (strain L48).